A 617-amino-acid chain; its full sequence is Dihydroxy-acid dehydratase (617 aa).

A Mg(2+)-binding site is contributed by D81. C122 lines the [2Fe-2S] cluster pocket. Mg(2+) is bound by residues D123 and K124. Position 124 is an N6-carboxylysine (K124). Position 197 (C197) interacts with [2Fe-2S] cluster. Mg(2+) is bound at residue E493. Catalysis depends on S519, which acts as the Proton acceptor.

This sequence belongs to the IlvD/Edd family. In terms of assembly, homodimer. [2Fe-2S] cluster serves as cofactor. Requires Mg(2+) as cofactor.

It carries out the reaction (2R)-2,3-dihydroxy-3-methylbutanoate = 3-methyl-2-oxobutanoate + H2O. The enzyme catalyses (2R,3R)-2,3-dihydroxy-3-methylpentanoate = (S)-3-methyl-2-oxopentanoate + H2O. The protein operates within amino-acid biosynthesis; L-isoleucine biosynthesis; L-isoleucine from 2-oxobutanoate: step 3/4. It participates in amino-acid biosynthesis; L-valine biosynthesis; L-valine from pyruvate: step 3/4. Functions in the biosynthesis of branched-chain amino acids. Catalyzes the dehydration of (2R,3R)-2,3-dihydroxy-3-methylpentanoate (2,3-dihydroxy-3-methylvalerate) into 2-oxo-3-methylpentanoate (2-oxo-3-methylvalerate) and of (2R)-2,3-dihydroxy-3-methylbutanoate (2,3-dihydroxyisovalerate) into 2-oxo-3-methylbutanoate (2-oxoisovalerate), the penultimate precursor to L-isoleucine and L-valine, respectively. The chain is Dihydroxy-acid dehydratase from Corynebacterium aurimucosum (strain ATCC 700975 / DSM 44827 / CIP 107346 / CN-1) (Corynebacterium nigricans).